We begin with the raw amino-acid sequence, 355 residues long: Tetraspanin-10 (355 aa).

The tract at residues 1–33 is disordered; it reads MEEGERSPLLSQETAGQKPLSVHRPPTSGCLGP. The Cytoplasmic portion of the chain corresponds to 1 to 78; it reads MEEGERSPLL…LSPGSSCVKY (78 aa). The chain crosses the membrane as a helical span at residues 79–99; it reads LIFLSNFPFSLLGLLALAIGL. Topologically, residues 100–120 are extracellular; it reads WGLAVKGSLGSDLGGPLPTDP. The helical transmembrane segment at 121–141 threads the bilayer; the sequence is MLGLALGGLVVSAASLAGCLG. Residues 142–154 lie on the Cytoplasmic side of the membrane; that stretch reads ALCENTCLLRGFS. The chain crosses the membrane as a helical span at residues 155-175; the sequence is GGILAFLVLEAVAGALVVALW. At 176-355 the chain is on the extracellular side; the sequence is GPLQDSLEHT…APPAAKPARG (180 aa). Cystine bridges form between cysteine 212/cysteine 279, cysteine 213/cysteine 243, cysteine 229/cysteine 237, and cysteine 244/cysteine 258. Asparagine 228 carries an N-linked (GlcNAc...) asparagine glycan. Residues 327-355 form a disordered region; the sequence is YGPGAHGEDRAGPQSPSPGAPPAAKPARG. Positions 341–355 are enriched in pro residues; it reads SPSPGAPPAAKPARG.

This sequence belongs to the tetraspanin (TM4SF) family. As to quaternary structure, interacts with ADAM10. Expressed in the eye, including iris, ciliary body, retinal pigment epithelium, but not lens (protein level).

It is found in the cell membrane. In terms of biological role, part of TspanC8 subgroup, composed of 6 members that interact with the transmembrane metalloprotease ADAM10. This interaction is required for ADAM10 exit from the endoplasmic reticulum and for enzymatic maturation and trafficking to the cell surface as well as substrate specificity. Different TspanC8/ADAM10 complexes have distinct substrates. This Homo sapiens (Human) protein is Tetraspanin-10.